The primary structure comprises 569 residues: MDEGGMPLLPDSLVYQIFLSLGPADVLAAGLVCRQWQAVSRDEFLWREQFYRYYQVARDVPRHPAATSWYEEFRRLYDMVPCVEVQTLKEHTDQVLHLSFSHSGYQFASCSKDCTVKIWNNDLTISLLHSADMRPYNWSYTQFSQFNQDDSLLLASGVFLGPHNSSSGEIAVISLDSFALLSRVRNKPYDVFGCWLTETSLISGNLHRIGDVTSCSVLWLNNAFQDVESENVNVVKRLFKIQNLNASTIRTVMVADCSRFDSPDLLLDAGDQAGLPCRVFDLGGDTEEEATDPGLHTSGSGHVKEGLRRVFDSVLDGHGQLSDCALETKVAELLAQGHTKPPECPDADSRNKYLIFTTGCLTYSPHQIGIKQILPHQMTTAGPVLGEGRGSDAFFDALDHVIDVHGHIIGMGLSPDNRYLYVNSRAWPPGSVVADPMQPPPIAEEIDLLVFDLKTMREVKRALRAHRAYTPNDECFFIFLDVSRDFVASGAEDRHGYIWDRHYNICLAKLRHEDVVNSVAFSPQEQELLLTASDDATIKAWRSPRIVRVLQAPHPRPRPFFSWFASHRR.

One can recognise an F-box domain in the interval 3–49 (EGGMPLLPDSLVYQIFLSLGPADVLAAGLVCRQWQAVSRDEFLWREQ). One copy of the WD 1 repeat lies at 90–129 (EHTDQVLHLSFSHSGYQFASCSKDCTVKIWNNDLTISLLH). Ser-151 is modified (phosphoserine; by PLK4). The short motif at 308–316 (RRVFDSVLD) is the D-box element. WD repeat units follow at residues 470–509 (TPND…CLAK) and 511–551 (RHED…RVLQ).

This sequence belongs to the FBXW5 family. As to quaternary structure, part of the SCF (SKP1-CUL1-F-box) E3 ubiquitin-protein ligase complex SCF(FBXW5) composed of CUL1, SKP1, RBX1 and FBXW5. Component of the DCX(FBXW5) E3 ubiquitin ligase complex, at least composed of (CUL4A or CUL4B), DDB1, FBXW5 and RBX1. Interacts with CDC20, EPS8, TSC1, TSC2 and SASS6. Interacts with TNFAIP8L1; TNFAIP8L1 competes with TSC2 to bind FBXW5 increasing TSC2 stability by preventing its ubiquitination. Post-translationally, phosphorylated at Ser-151 by PLK4 during the G1/S transition, leading to inhibit its ability to ubiquitinate SASS6. Ubiquitinated and degraded by the APC/C complex during mitosis and G1 phase.

The protein resides in the cytoplasm. It participates in protein modification; protein ubiquitination. Its function is as follows. Substrate recognition component of both SCF (SKP1-CUL1-F-box protein) and DCX (DDB1-CUL4-X-box) E3 ubiquitin-protein ligase complexes. Substrate recognition component of the SCF(FBXW5) E3 ubiquitin-protein ligase complex which mediates the ubiquitination and subsequent proteasomal degradation of SASS6 during S phase, leading to prevent centriole reduplication. The SCF(FBXW5) complex also mediates ubiquitination and degradation of actin-regulator EPS8 during G2 phase, leading to the transient degradation of EPS8 and subsequent cell shape changes required to allow mitotic progression. Substrate-specific adapter of the DCX(FBXW5) E3 ubiquitin-protein ligase complex which mediates the polyubiquitination and subsequent degradation of TSC2. May also act as a negative regulator of MAP3K7/TAK1 signaling in the interleukin-1B (IL1B) signaling pathway. This chain is F-box/WD repeat-containing protein 5 (Fbxw5), found in Rattus norvegicus (Rat).